Reading from the N-terminus, the 638-residue chain is Chaperone protein DnaK (638 aa).

The residue at position 196 (threonine 196) is a Phosphothreonine; by autocatalysis. Residues 592–638 (ASNLYQQPGAEAGAAPQPETNGQQESKGGDGAVNAEYEVIDGDDDKK) form a disordered region. Low complexity predominate over residues 597-610 (QQPGAEAGAAPQPE). The span at 629 to 638 (EVIDGDDDKK) shows a compositional bias: acidic residues.

It belongs to the heat shock protein 70 family.

Functionally, acts as a chaperone. This chain is Chaperone protein DnaK, found in Chlorobaculum parvum (strain DSM 263 / NCIMB 8327) (Chlorobium vibrioforme subsp. thiosulfatophilum).